Here is a 917-residue protein sequence, read N- to C-terminus: Phosphoenolpyruvate carboxylase (917 aa).

Catalysis depends on residues histidine 145 and lysine 578.

This sequence belongs to the PEPCase type 1 family. Mg(2+) is required as a cofactor.

The catalysed reaction is oxaloacetate + phosphate = phosphoenolpyruvate + hydrogencarbonate. Its function is as follows. Forms oxaloacetate, a four-carbon dicarboxylic acid source for the tricarboxylic acid cycle. This Azoarcus sp. (strain BH72) protein is Phosphoenolpyruvate carboxylase.